A 580-amino-acid polypeptide reads, in one-letter code: Putative ankyrin repeat protein L63 (580 aa).

ANK repeat units lie at residues 81–110 (SLNRHFKMSCEKGQYTIVTYLVALGADFRI), 111–140 (DNDYGLIHAAKNGHIGVVKYLVSKGVNIGA), 141–170 (NDNCAIKFASENGHLEVVEYLVSKGADINA), 172–200 (NNYPIEMASKNGHLKVVEYLVSLGVDIRA), 202–230 (DDYVVGLAYYYDHHEVVDYLVSQGAVLNK), 314–339 (SLDDYLVKSCCEGDLSIIKDLILLGA), 340–369 (SERKAVMLACQNGHLEIIRYFVSQGFNIKC), 370–399 (GSNCAVTIASENGHIEVVRYLISLGADINS), 400–429 (GNNYAIKYASENGHLEVVKYLVDQGANIRA), 431–459 (NDRAVRFASRKGHLEVVKYLVSKGANIRA), 461–489 (DDRAVTLASQNGHLEVVKYLVSQGTDIKA), 490–519 (GDDYAVRWASRNGHLEVVKYLISQGANIKA), 521–549 (DDYAVRWASLNGHLEVVKFLVNQNADIRA), and 551–579 (NNYAVRWAHKNKHFDVVEYLISQGAVINP).

The sequence is that of Putative ankyrin repeat protein L63 from Acanthamoeba polyphaga (Amoeba).